Reading from the N-terminus, the 422-residue chain is SPbeta prophage-derived glycosyltransferase SunS (422 aa).

It belongs to the glycosyltransferase 2 family.

Functionally, transfers a hexose moiety onto 'Cys-41' of bacteriocin sublancin-168 (SunA). Accepts UDP-glucose (UDP-Glc), UDP-N-acetylglucosamine (UDP-GlcNAc), UDP-galactose (UDP-Gal), UDP-xylose (UDP-Xyl) and GDP-mannose as substrate. This chain is SPbeta prophage-derived glycosyltransferase SunS (sunS), found in Bacillus subtilis (strain 168).